Reading from the N-terminus, the 589-residue chain is Protein sprouty (589 aa).

Disordered regions lie at residues 1–37, 102–194, and 239–320; these read MDRR…GVDH, RPSS…RPES, and LHLQ…MGLG. 2 stretches are compositionally biased toward low complexity: residues 104 to 135 and 148 to 162; these read SSLS…SSSS and NNSI…INNN. Positions 163–172 are enriched in polar residues; it reads FLSHFQSAEP. Positions 239 to 272 are enriched in low complexity; that stretch reads LHLQQHQQHLQQQQQQQQQQQQQQHLQHQQNQQH. Residues 276–286 are compositionally biased toward polar residues; it reads ATTTQATSVGS. Residues 380–499 form the SPR domain; that stretch reads RCGRCRCEQC…CYGRFAGRGC (120 aa).

Belongs to the sprouty family. As to quaternary structure, interacts with DRK and RasGAP1 proteins of the Ras pathway. As to expression, in ovary, expressed from stage 7 of oogenesis in the posterior follicle cells and during stage 9 when the follicle cells migrate posteriorly over the oocyte nucleus, expression is seen in the dorsal and lateral cells and is excluded from the ventral cells. Once the migration of follicle cells is complete expressed in the dorsal-anterior corner of the egg chamber. Expressed in the embryonic tracheal system, developing eye imaginal disk, embryonic chordotonal organ precursors, midline glia and wing imaginal disk.

The protein localises to the cell membrane. In terms of biological role, inhibitor of tracheal branching that restricts branch budding by antagonizing the BNL-FGF pathway (BNL: branchless, an fgf inducer of branching). Acts as an antagonist of EGFR-mediated signaling in the eye (where it is important for cell determination) midline glia, chordotonal organs, wing and ovarian follicle cells. This is Protein sprouty (sty) from Drosophila melanogaster (Fruit fly).